We begin with the raw amino-acid sequence, 151 residues long: Nucleoside diphosphate kinase (151 aa).

6 residues coordinate ATP: lysine 11, phenylalanine 59, arginine 87, threonine 93, arginine 104, and asparagine 114. Catalysis depends on histidine 117, which acts as the Pros-phosphohistidine intermediate.

The protein belongs to the NDK family. Homotetramer. The cofactor is Mg(2+).

It is found in the cytoplasm. It catalyses the reaction a 2'-deoxyribonucleoside 5'-diphosphate + ATP = a 2'-deoxyribonucleoside 5'-triphosphate + ADP. The catalysed reaction is a ribonucleoside 5'-diphosphate + ATP = a ribonucleoside 5'-triphosphate + ADP. In terms of biological role, major role in the synthesis of nucleoside triphosphates other than ATP. The ATP gamma phosphate is transferred to the NDP beta phosphate via a ping-pong mechanism, using a phosphorylated active-site intermediate. This is Nucleoside diphosphate kinase from Prochlorococcus marinus (strain NATL1A).